A 351-amino-acid chain; its full sequence is Calcium homeostasis modulator 1 (351 aa).

The Cytoplasmic segment spans residues 1–20 (MDKFRMMFQFLQSNQESFMN). Residues 9–36 (QFLQSNQESFMNGICGIMALASAQMYSS) are central pore. The helical transmembrane segment at 21-36 (GICGIMALASAQMYSS) threads the bilayer. The Extracellular segment spans residues 37–48 (FEFSCPCMPEYN). Cystine bridges form between Cys-41/Cys-126 and Cys-43/Cys-160. A helical membrane pass occupies residues 49–71 (YTYGIGLLIIPPIWFFLLGFVLN). The interval 62–69 (WFFLLGFV) is phospholipid-binding. At 72–98 (NNVSVLAEEWKRPTGRRTKDPSVLRYM) the chain is on the cytoplasmic side. A helical membrane pass occupies residues 99-124 (LCSITQRSLIAPAVWVSVTLMDGKSF). Residue Cys-100 is the site of S-palmitoyl cysteine attachment. Residues 104–116 (QRSLIAPAVWVSV) form a phospholipid-binding region. At 125–177 (LCAFSINLDIEKFGNASLVIGMTETEKLKFLARIPCKDLFEDNEVRVAATRYI) the chain is on the extracellular side. N-linked (GlcNAc...) asparagine glycosylation is present at Asn-139. The chain crosses the membrane as a helical span at residues 178–203 (KCISQACGWMFLLMMTFTAFLIRAIR). Residues 189–199 (LLMMTFTAFLI) form a phospholipid-binding region. Residues 204–351 (PCFTQAAFLK…KEWAVYYSKV (148 aa)) lie on the Cytoplasmic side of the membrane. A lipid anchor (S-palmitoyl cysteine) is attached at Cys-205. A disordered region spans residues 259 to 281 (HRHQSKDTSDAEEEEKQRSDEDK). A compositionally biased stretch (basic and acidic residues) spans 263 to 281 (SKDTSDAEEEEKQRSDEDK).

The protein belongs to the CALHM family. Oligomerizes to form hexamers and octamers. Does not form gap junctions. Associates with CALHM3 as a pore-forming subunit in a hetero-hexameric channel complex. Post-translationally, N-glycosylated. In terms of processing, palmitoylated.

Its subcellular location is the cell membrane. It localises to the endoplasmic reticulum membrane. The protein localises to the basolateral cell membrane. It catalyses the reaction ATP(in) = ATP(out). It carries out the reaction Ca(2+)(in) = Ca(2+)(out). The enzyme catalyses Mg(2+)(in) = Mg(2+)(out). The catalysed reaction is Na(+)(in) = Na(+)(out). It catalyses the reaction K(+)(in) = K(+)(out). It carries out the reaction Li(+)(in) = Li(+)(out). The enzyme catalyses Rb(+)(in) = Rb(+)(out). The catalysed reaction is Cs(+)(in) = Cs(+)(out). It catalyses the reaction chloride(in) = chloride(out). Activated in response to membrane depolarization and low extracellular Ca(2+) concentration. Inhibited by ruthenium red. Pore-forming subunit of a voltage-gated ion channel. Has poor ion selectivity and forms a wide pore that mediates permeation of small ions including Ca(2+), Na(+), K(+) and Cl(-), as well as larger ions such as ATP(4-). The protein is Calcium homeostasis modulator 1 of Oryzias latipes (Japanese rice fish).